Here is a 306-residue protein sequence, read N- to C-terminus: Acetyl-coenzyme A carboxylase carboxyl transferase subunit beta (306 aa).

Residues 27 to 296 (LWHKCPSCEA…PKFVAAPIEP (270 aa)) enclose the CoA carboxyltransferase N-terminal domain. 4 residues coordinate Zn(2+): cysteine 31, cysteine 34, cysteine 50, and cysteine 53. The segment at 31 to 53 (CPSCEAVLYRPELEKTLDVCPKC) adopts a C4-type zinc-finger fold.

It belongs to the AccD/PCCB family. Acetyl-CoA carboxylase is a heterohexamer composed of biotin carboxyl carrier protein (AccB), biotin carboxylase (AccC) and two subunits each of ACCase subunit alpha (AccA) and ACCase subunit beta (AccD). Requires Zn(2+) as cofactor.

It localises to the cytoplasm. It carries out the reaction N(6)-carboxybiotinyl-L-lysyl-[protein] + acetyl-CoA = N(6)-biotinyl-L-lysyl-[protein] + malonyl-CoA. Its pathway is lipid metabolism; malonyl-CoA biosynthesis; malonyl-CoA from acetyl-CoA: step 1/1. Component of the acetyl coenzyme A carboxylase (ACC) complex. Biotin carboxylase (BC) catalyzes the carboxylation of biotin on its carrier protein (BCCP) and then the CO(2) group is transferred by the transcarboxylase to acetyl-CoA to form malonyl-CoA. The polypeptide is Acetyl-coenzyme A carboxylase carboxyl transferase subunit beta (Pseudomonas fluorescens (strain Pf0-1)).